A 690-amino-acid chain; its full sequence is DNA ligase (690 aa).

NAD(+)-binding positions include 43–47 (DAEYD), 92–93 (SI), and glutamate 129. Lysine 131 (N6-AMP-lysine intermediate) is an active-site residue. 4 residues coordinate NAD(+): arginine 152, glutamate 188, lysine 309, and lysine 333. Zn(2+) contacts are provided by cysteine 427, cysteine 430, cysteine 445, and cysteine 451. The region spanning 610-690 (VTPTPLSGKT…GLKELLDGHS (81 aa)) is the BRCT domain.

This sequence belongs to the NAD-dependent DNA ligase family. LigA subfamily. It depends on Mg(2+) as a cofactor. Requires Mn(2+) as cofactor.

The catalysed reaction is NAD(+) + (deoxyribonucleotide)n-3'-hydroxyl + 5'-phospho-(deoxyribonucleotide)m = (deoxyribonucleotide)n+m + AMP + beta-nicotinamide D-nucleotide.. Functionally, DNA ligase that catalyzes the formation of phosphodiester linkages between 5'-phosphoryl and 3'-hydroxyl groups in double-stranded DNA using NAD as a coenzyme and as the energy source for the reaction. It is essential for DNA replication and repair of damaged DNA. The polypeptide is DNA ligase (Albidiferax ferrireducens (strain ATCC BAA-621 / DSM 15236 / T118) (Rhodoferax ferrireducens)).